The following is a 172-amino-acid chain: Keratin-associated protein 13-1 (172 aa).

5 consecutive repeat copies span residues 46-55 (CQLGSSLYRG), 56-65 (CQQTCWEPTS), 66-75 (CQTSYVESSP), 76-85 (CQTSCYRPRT), and 92-101 (CQTTYSGSLG). Residues 46–101 (CQLGSSLYRGCQQTCWEPTSCQTSYVESSPCQTSCYRPRTSLLCSPCQTTYSGSLG) are 5 X 10 AA approximate repeats.

It belongs to the PMG family. In terms of assembly, interacts with hair keratins. Weak expression seen in the late matrix and entire cortex area of the hair follicle.

In terms of biological role, in the hair cortex, hair keratin intermediate filaments are embedded in an interfilamentous matrix, consisting of hair keratin-associated proteins (KRTAP), which are essential for the formation of a rigid and resistant hair shaft through their extensive disulfide bond cross-linking with abundant cysteine residues of hair keratins. The matrix proteins include the high-sulfur and high-glycine-tyrosine keratins. The protein is Keratin-associated protein 13-1 (KRTAP13-1) of Homo sapiens (Human).